A 192-amino-acid polypeptide reads, in one-letter code: HTH-type transcriptional repressor SCO4008 (192 aa).

The HTH tetR-type domain occupies 7–67; the sequence is EATKARIFEA…SVLEKKMLDL (61 aa). A DNA-binding region (H-T-H motif) is located at residues 30–49; that stretch reads RIDRIAAEARANKQLIYAYY.

Homodimer. Four dimers bind to the two operator sites.

Binding of a wide range of cationic hydrophobic compounds to SCO4008 causes a decrease in DNA-binding, probably via allosteric conformational change of SCO4008. Probably regulates the expression of its own gene and the adjacent SCO4007 gene by binding to two operator sites in the SCO4007-SCO4008 intergenic region. The sequence is that of HTH-type transcriptional repressor SCO4008 from Streptomyces coelicolor (strain ATCC BAA-471 / A3(2) / M145).